The chain runs to 183 residues: Hypoxanthine/guanine phosphoribosyltransferase (183 aa).

The protein belongs to the purine/pyrimidine phosphoribosyltransferase family. Archaeal HPRT subfamily. Homodimer.

It localises to the cytoplasm. It catalyses the reaction IMP + diphosphate = hypoxanthine + 5-phospho-alpha-D-ribose 1-diphosphate. It carries out the reaction GMP + diphosphate = guanine + 5-phospho-alpha-D-ribose 1-diphosphate. It participates in purine metabolism; IMP biosynthesis via salvage pathway; IMP from hypoxanthine: step 1/1. In terms of biological role, catalyzes a salvage reaction resulting in the formation of IMP that is energically less costly than de novo synthesis. The chain is Hypoxanthine/guanine phosphoribosyltransferase from Methanocaldococcus vulcanius (strain ATCC 700851 / DSM 12094 / M7) (Methanococcus vulcanius).